Here is a 314-residue protein sequence, read N- to C-terminus: Diisopropyl-fluorophosphatase (314 aa).

Glu-21, Asn-120, Asn-175, Asp-229, Asp-232, Leu-273, and His-274 together coordinate Ca(2+). The active-site Proton acceptor is the His-287.

In terms of assembly, monomer. It depends on Ca(2+) as a cofactor.

The catalysed reaction is diisopropyl fluorophosphate + H2O = diisopropyl phosphate + fluoride + 2 H(+). Its activity is regulated as follows. Inhibited by chelating agents. Functionally, biological function and substrate unknown. However, it is capable of acting on phosphorus anhydride bonds (such as phosphorus-halide and phosphorus-cyanide) in organophosphorus compounds (including nerve gases). The protein is Diisopropyl-fluorophosphatase of Loligo vulgaris (Common European squid).